Here is a 189-residue protein sequence, read N- to C-terminus: ATP synthase subunit delta (189 aa).

The protein belongs to the ATPase delta chain family. F-type ATPases have 2 components, F(1) - the catalytic core - and F(0) - the membrane proton channel. F(1) has five subunits: alpha(3), beta(3), gamma(1), delta(1), epsilon(1). F(0) has three main subunits: a(1), b(2) and c(10-14). The alpha and beta chains form an alternating ring which encloses part of the gamma chain. F(1) is attached to F(0) by a central stalk formed by the gamma and epsilon chains, while a peripheral stalk is formed by the delta and b chains.

Its subcellular location is the cell inner membrane. Functionally, f(1)F(0) ATP synthase produces ATP from ADP in the presence of a proton or sodium gradient. F-type ATPases consist of two structural domains, F(1) containing the extramembraneous catalytic core and F(0) containing the membrane proton channel, linked together by a central stalk and a peripheral stalk. During catalysis, ATP synthesis in the catalytic domain of F(1) is coupled via a rotary mechanism of the central stalk subunits to proton translocation. This protein is part of the stalk that links CF(0) to CF(1). It either transmits conformational changes from CF(0) to CF(1) or is implicated in proton conduction. This chain is ATP synthase subunit delta, found in Methylorubrum extorquens (strain CM4 / NCIMB 13688) (Methylobacterium extorquens).